A 229-amino-acid polypeptide reads, in one-letter code: 7-cyano-7-deazaguanine synthase (229 aa).

8–18 contributes to the ATP binding site; sequence FSGGQDSTTCL. The Zn(2+) site is built by cysteine 187, cysteine 196, cysteine 199, and cysteine 202.

This sequence belongs to the QueC family. Requires Zn(2+) as cofactor.

The enzyme catalyses 7-carboxy-7-deazaguanine + NH4(+) + ATP = 7-cyano-7-deazaguanine + ADP + phosphate + H2O + H(+). Its pathway is purine metabolism; 7-cyano-7-deazaguanine biosynthesis. In terms of biological role, catalyzes the ATP-dependent conversion of 7-carboxy-7-deazaguanine (CDG) to 7-cyano-7-deazaguanine (preQ(0)). In Shewanella halifaxensis (strain HAW-EB4), this protein is 7-cyano-7-deazaguanine synthase.